A 390-amino-acid chain; its full sequence is Isoaspartyl dipeptidase (390 aa).

Residues H68 and H70 each contribute to the Zn(2+) site. Substrate-binding positions include 75–77 (GGE), T106, and Y137. K162 serves as a coordination point for Zn(2+). Position 162 is an N6-carboxylysine (K162). R169 is a binding site for substrate. The Zn(2+) site is built by H201 and H230. R233 serves as a coordination point for substrate. Position 285 (D285) interacts with Zn(2+). D285 (proton acceptor) is an active-site residue. Position 289 (S289) interacts with substrate.

It belongs to the peptidase M38 family. Zn(2+) is required as a cofactor. It depends on Co(2+) as a cofactor. Carboxylation allows a single lysine to coordinate two zinc ions.

The protein localises to the cytoplasm. P-hydroxymercuribenzoate causes a slight inhibition (8 to 17 %). Iodoacetamide, o-iodosobenzoate and ammonium persulfate do not inhibit the enzyme activity. Its function is as follows. Catalyzes the hydrolytic cleavage of a subset of L-isoaspartyl (L-beta-aspartyl) dipeptides. Used to degrade proteins damaged by L-isoaspartyl residues formation. The best substrate for the enzyme reported thus far is iso-Asp-Leu. The protein is Isoaspartyl dipeptidase (iadA) of Escherichia coli (strain K12).